The following is a 323-amino-acid chain: Coiled-coil domain-containing protein 160 (323 aa).

Positions 143–290 form a coiled coil; sequence SKLRLNLLNE…IKNELRTEKS (148 aa).

This sequence belongs to the CCDC160 family.

This is Coiled-coil domain-containing protein 160 (CCDC160) from Bos taurus (Bovine).